The sequence spans 445 residues: Serine--tRNA ligase (445 aa).

229–231 lines the L-serine pocket; the sequence is TAE. ATP is bound by residues 260–262 and valine 276; that span reads RKE. Glutamate 283 contributes to the L-serine binding site. An ATP-binding site is contributed by 347 to 350; the sequence is EVSS. An L-serine-binding site is contributed by serine 383.

The protein belongs to the class-II aminoacyl-tRNA synthetase family. Type-1 seryl-tRNA synthetase subfamily. As to quaternary structure, homodimer. The tRNA molecule binds across the dimer.

Its subcellular location is the cytoplasm. It carries out the reaction tRNA(Ser) + L-serine + ATP = L-seryl-tRNA(Ser) + AMP + diphosphate + H(+). The catalysed reaction is tRNA(Sec) + L-serine + ATP = L-seryl-tRNA(Sec) + AMP + diphosphate + H(+). Its pathway is aminoacyl-tRNA biosynthesis; selenocysteinyl-tRNA(Sec) biosynthesis; L-seryl-tRNA(Sec) from L-serine and tRNA(Sec): step 1/1. Its function is as follows. Catalyzes the attachment of serine to tRNA(Ser). Is also able to aminoacylate tRNA(Sec) with serine, to form the misacylated tRNA L-seryl-tRNA(Sec), which will be further converted into selenocysteinyl-tRNA(Sec). This Thermomicrobium roseum (strain ATCC 27502 / DSM 5159 / P-2) protein is Serine--tRNA ligase.